Here is a 378-residue protein sequence, read N- to C-terminus: Dual-specificity RNA methyltransferase RlmN 2 (378 aa).

The active-site Proton acceptor is the glutamate 113. Residues 119 to 355 (TEDRRTLCVS…AAYIRRNRGR (237 aa)) form the Radical SAM core domain. The cysteines at positions 126 and 361 are disulfide-linked. The [4Fe-4S] cluster site is built by cysteine 133, cysteine 137, and cysteine 140. Residues 188-189 (GE), serine 220, 242-244 (SLN), and asparagine 318 contribute to the S-adenosyl-L-methionine site. The active-site S-methylcysteine intermediate is cysteine 361.

This sequence belongs to the radical SAM superfamily. RlmN family. The cofactor is [4Fe-4S] cluster.

It is found in the cytoplasm. It catalyses the reaction adenosine(2503) in 23S rRNA + 2 reduced [2Fe-2S]-[ferredoxin] + 2 S-adenosyl-L-methionine = 2-methyladenosine(2503) in 23S rRNA + 5'-deoxyadenosine + L-methionine + 2 oxidized [2Fe-2S]-[ferredoxin] + S-adenosyl-L-homocysteine. The catalysed reaction is adenosine(37) in tRNA + 2 reduced [2Fe-2S]-[ferredoxin] + 2 S-adenosyl-L-methionine = 2-methyladenosine(37) in tRNA + 5'-deoxyadenosine + L-methionine + 2 oxidized [2Fe-2S]-[ferredoxin] + S-adenosyl-L-homocysteine. Its function is as follows. Specifically methylates position 2 of adenine 2503 in 23S rRNA and position 2 of adenine 37 in tRNAs. m2A2503 modification seems to play a crucial role in the proofreading step occurring at the peptidyl transferase center and thus would serve to optimize ribosomal fidelity. This Myxococcus xanthus (strain DK1622) protein is Dual-specificity RNA methyltransferase RlmN 2.